The following is a 492-amino-acid chain: uncharacterized protein (492 aa).

An N-terminal signal peptide occupies residues 1–22 (MIRPNMFALLMLVVLAITSVNA). 7 N-linked (GlcNAc...) asparagine; by host glycosylation sites follow: N92, N97, N119, N146, N213, N267, and N458.

The protein localises to the secreted. This is an uncharacterized protein from Acanthamoeba polyphaga (Amoeba).